A 271-amino-acid chain; its full sequence is Ribosomal RNA small subunit methyltransferase I (271 aa).

Belongs to the methyltransferase superfamily. RsmI family.

The protein resides in the cytoplasm. It carries out the reaction cytidine(1402) in 16S rRNA + S-adenosyl-L-methionine = 2'-O-methylcytidine(1402) in 16S rRNA + S-adenosyl-L-homocysteine + H(+). In terms of biological role, catalyzes the 2'-O-methylation of the ribose of cytidine 1402 (C1402) in 16S rRNA. The protein is Ribosomal RNA small subunit methyltransferase I of Campylobacter fetus subsp. fetus (strain 82-40).